The following is a 349-amino-acid chain: Putative ABC transporter permease protein MJ0087 (349 aa).

9 helical membrane-spanning segments follow: residues 15 to 35 (IIFG…ALCV), 69 to 89 (IFAA…MQCI), 100 to 120 (MGIS…FGFG), 135 to 155 (MITI…LLLA), 166 to 186 (ILAG…IQYF), 206 to 226 (AIWT…IYFM), 254 to 274 (LIGM…LGII), 295 to 315 (FLIP…DTFA), and 318 to 338 (IIAP…APMF).

The protein belongs to the binding-protein-dependent transport system permease family. FecCD subfamily.

The protein resides in the cell membrane. In terms of biological role, probably part of a binding-protein-dependent transport system. Probably responsible for the translocation of the substrate across the membrane. The protein is Putative ABC transporter permease protein MJ0087 of Methanocaldococcus jannaschii (strain ATCC 43067 / DSM 2661 / JAL-1 / JCM 10045 / NBRC 100440) (Methanococcus jannaschii).